The primary structure comprises 455 residues: Ectonucleoside triphosphate diphosphohydrolase 6 (455 aa).

Residues 1–12 lie on the Cytoplasmic side of the membrane; sequence MRKIPNHGTLRM. A helical membrane pass occupies residues 13 to 32; sequence TKVAYPLGLCVGLFIYVAYI. Residues 33–455 are Lumenal-facing; it reads KWHRASAAQA…SLKRQKVPAL (423 aa). Glu-196 acts as the Proton acceptor in catalysis. 2 cysteine pairs are disulfide-bonded: Cys-297-Cys-327 and Cys-387-Cys-401.

Belongs to the GDA1/CD39 NTPase family. Requires Mg(2+) as cofactor. Ca(2+) is required as a cofactor. In terms of processing, N-glycosylated.

It localises to the golgi apparatus membrane. Its subcellular location is the secreted. The protein resides in the cell membrane. The catalysed reaction is a ribonucleoside 5'-diphosphate + H2O = a ribonucleoside 5'-phosphate + phosphate + H(+). The enzyme catalyses IDP + H2O = IMP + phosphate + H(+). It carries out the reaction GDP + H2O = GMP + phosphate + H(+). It catalyses the reaction UDP + H2O = UMP + phosphate + H(+). In terms of biological role, catalyzes the hydrolysis of nucleoside triphosphates and diphosphates in a calcium- or magnesium-dependent manner. Has a strong preference for nucleoside diphosphates, preferentially hydrolyzes GDP, IDP, and UDP, with slower hydrolysis of CDP, ITP, GTP, CTP, ADP, and UTP and virtually no hydrolysis of ATP. The membrane bound form might support glycosylation reactions in the Golgi apparatus and, when released from cells, might catalyze the hydrolysis of extracellular nucleotides. This Mus musculus (Mouse) protein is Ectonucleoside triphosphate diphosphohydrolase 6.